The chain runs to 94 residues: Co-chaperonin GroES (94 aa).

Belongs to the GroES chaperonin family. As to quaternary structure, heptamer of 7 subunits arranged in a ring. Interacts with the chaperonin GroEL.

It is found in the cytoplasm. In terms of biological role, together with the chaperonin GroEL, plays an essential role in assisting protein folding. The GroEL-GroES system forms a nano-cage that allows encapsulation of the non-native substrate proteins and provides a physical environment optimized to promote and accelerate protein folding. GroES binds to the apical surface of the GroEL ring, thereby capping the opening of the GroEL channel. The polypeptide is Co-chaperonin GroES (Orientia tsutsugamushi (Rickettsia tsutsugamushi)).